Consider the following 233-residue polypeptide: Large ribosomal subunit protein uL1 (233 aa).

Belongs to the universal ribosomal protein uL1 family. Part of the 50S ribosomal subunit.

Its function is as follows. Binds directly to 23S rRNA. The L1 stalk is quite mobile in the ribosome, and is involved in E site tRNA release. Functionally, protein L1 is also a translational repressor protein, it controls the translation of the L11 operon by binding to its mRNA. This Syntrophomonas wolfei subsp. wolfei (strain DSM 2245B / Goettingen) protein is Large ribosomal subunit protein uL1.